We begin with the raw amino-acid sequence, 423 residues long: COP9 signalosome complex subunit 3 (423 aa).

An N-acetylalanine modification is found at alanine 2. One can recognise a PCI domain in the interval 197–365 (NFERALYFYE…GMVSFHDNPE (169 aa)). The tract at residues 402–423 (QFVQKSMGSQEDDSGNKPSSYS) is disordered. Residues serine 407, serine 410, and serine 423 each carry the phosphoserine modification.

It belongs to the CSN3 family. In terms of assembly, component of the CSN complex, composed of COPS1/GPS1, COPS2, COPS3, COPS4, COPS5, COPS6, COPS7 (COPS7A or COPS7B), COPS8 and COPS9. In the complex, it probably interacts directly with COPS1, COPS4, COPS8 and COPS9. Interacts with CK2 and PKD. Interacts with the translation initiation factor EIF3S6 and IKBKG. Interacts with ERCC6.

The protein resides in the cytoplasm. It is found in the nucleus. Functionally, component of the COP9 signalosome complex (CSN), a complex involved in various cellular and developmental processes. The CSN complex is an essential regulator of the ubiquitin (Ubl) conjugation pathway by mediating the deneddylation of the cullin subunits of SCF-type E3 ligase complexes, leading to decrease the Ubl ligase activity of SCF-type complexes such as SCF, CSA or DDB2. The complex is also involved in phosphorylation of p53/TP53, c-jun/JUN, IkappaBalpha/NFKBIA, ITPK1 and IRF8/ICSBP, possibly via its association with CK2 and PKD kinases. CSN-dependent phosphorylation of TP53 and JUN promotes and protects degradation by the Ubl system, respectively. Essential to maintain the survival of epiblast cells and thus the development of the postimplantation embryo. This chain is COP9 signalosome complex subunit 3 (Cops3), found in Rattus norvegicus (Rat).